Here is a 519-residue protein sequence, read N- to C-terminus: Cytochrome P450 monooxygenase apdE (519 aa).

The chain crosses the membrane as a helical span at residues Phe27–Tyr47. Residues Asn327 and Asn379 are each glycosylated (N-linked (GlcNAc...) asparagine). Heme is bound at residue Cys466. Residue Asn508 is glycosylated (N-linked (GlcNAc...) asparagine).

This sequence belongs to the cytochrome P450 family. It depends on heme as a cofactor.

It is found in the membrane. Its pathway is secondary metabolite biosynthesis. Cytochrome P450 monooxygenase; part of the gene cluster that mediates the biosynthesis of aspyridones. The polyketide-amino acid backbone preaspyridone A is first assembled by the PKS-NRPS hybrid apdA. The assembly of preaspyridone A is initiated by loading of malonyl-CoA onto apdA, followed by decarboxylation to yield the acetyl starter unit. The growing polyketide chain then elongates into a tetraketide. The adpA PKS module catalyzes three Claisen condensations, as well as beta-keto processing and methylation. Alpha-methylation step during polyketide synthesis is a prerequisite and a key checkpoint for chain transfer between PKS and NRPS modules. The downstream NRPS module contains the condensation (C), adenylation (A), and thiolation (T) domains and catalyzes the incorporation of tyrosine via the formation of the L-tyrosinyl-thioester and the amide linkage between L-tyrosinyl-thioester and the tetraketide. The bimodular assembly line is terminated with a reductase (R) domain that facilitates formation and release of the tetramic acid product. Because apdA lacks a designated enoylreductase (ER) domain, the required activity is provided the enoyl reductase apdC. ApdC appears to operate with different stereoselectivity in different PKS cycle. Combined with apdC, apdA is proposed to synthesize preaspyridone A via about 20 enzymatic steps. A number of oxidative steps performed successively by the cytochrome P450 monooxygenases apdE and apdB are required for the conversion of preaspyridone A to aspyridone A. The cytochrome P450 monooxygenase apdE is responsible for the oxidative dephenylation of preaspyridone A. Finally, the predicted FAD-dependent monooxygenase apdD and the acyl-CoA dehydrogenase apdG may be involved in the transformation of aspyridone A into aspyridone B. This Emericella nidulans (strain FGSC A4 / ATCC 38163 / CBS 112.46 / NRRL 194 / M139) (Aspergillus nidulans) protein is Cytochrome P450 monooxygenase apdE.